The primary structure comprises 257 residues: NAD-capped RNA hydrolase NudC (257 aa).

Substrate-binding residues include Lys-25 and Arg-69. Zn(2+) contacts are provided by Cys-98 and Cys-101. A substrate-binding site is contributed by Glu-111. Zn(2+) contacts are provided by Cys-116 and Cys-119. Tyr-124 is a binding site for substrate. The region spanning 125 to 248 (PQIAPCIIVA…TVARRLIEDT (124 aa)) is the Nudix hydrolase domain. Residues Ala-158, Glu-174, and Glu-178 each coordinate a divalent metal cation. Positions 159 to 180 (GFVEVGETLEQAVAREVMEESG) match the Nudix box motif. Residue 192-199 (QPWPFPQS) coordinates substrate. A divalent metal cation is bound at residue Glu-219. Residue Ala-241 participates in substrate binding.

This sequence belongs to the Nudix hydrolase family. NudC subfamily. Homodimer. It depends on Mg(2+) as a cofactor. Mn(2+) is required as a cofactor. The cofactor is Zn(2+).

The enzyme catalyses a 5'-end NAD(+)-phospho-ribonucleoside in mRNA + H2O = a 5'-end phospho-adenosine-phospho-ribonucleoside in mRNA + beta-nicotinamide D-ribonucleotide + 2 H(+). The catalysed reaction is NAD(+) + H2O = beta-nicotinamide D-ribonucleotide + AMP + 2 H(+). It carries out the reaction NADH + H2O = reduced beta-nicotinamide D-ribonucleotide + AMP + 2 H(+). In terms of biological role, mRNA decapping enzyme that specifically removes the nicotinamide adenine dinucleotide (NAD) cap from a subset of mRNAs by hydrolyzing the diphosphate linkage to produce nicotinamide mononucleotide (NMN) and 5' monophosphate mRNA. The NAD-cap is present at the 5'-end of some mRNAs and stabilizes RNA against 5'-processing. Has preference for mRNAs with a 5'-end purine. Catalyzes the hydrolysis of a broad range of dinucleotide pyrophosphates. This is NAD-capped RNA hydrolase NudC from Escherichia coli O45:K1 (strain S88 / ExPEC).